A 209-amino-acid chain; its full sequence is PF03932 family protein CutC (209 aa).

This sequence belongs to the CutC family.

It localises to the cytoplasm. In terms of biological role, might participate in the control of copper homeostasis; data from other bacteria suggests it is not involved. The protein is PF03932 family protein CutC of Enterococcus faecalis (strain ATCC 700802 / V583).